We begin with the raw amino-acid sequence, 62 residues long: Photosystem II reaction center protein Z (62 aa).

Transmembrane regions (helical) follow at residues 8 to 28 (AVFALIATSSILLIGVPVVFA) and 41 to 61 (FSGTSLWIGLVFLVGILNSLI).

It belongs to the PsbZ family. PSII is composed of 1 copy each of membrane proteins PsbA, PsbB, PsbC, PsbD, PsbE, PsbF, PsbH, PsbI, PsbJ, PsbK, PsbL, PsbM, PsbT, PsbY, PsbZ, Psb30/Ycf12, at least 3 peripheral proteins of the oxygen-evolving complex and a large number of cofactors. It forms dimeric complexes.

It is found in the plastid. The protein resides in the chloroplast thylakoid membrane. May control the interaction of photosystem II (PSII) cores with the light-harvesting antenna, regulates electron flow through the 2 photosystem reaction centers. PSII is a light-driven water plastoquinone oxidoreductase, using light energy to abstract electrons from H(2)O, generating a proton gradient subsequently used for ATP formation. The chain is Photosystem II reaction center protein Z from Panax ginseng (Korean ginseng).